Reading from the N-terminus, the 337-residue chain is uncharacterized protein (337 aa).

The protein belongs to the mimivirus R69 family.

This is an uncharacterized protein from Acanthamoeba polyphaga mimivirus (APMV).